A 509-amino-acid polypeptide reads, in one-letter code: Glycogen synthase 2 (509 aa).

Lys-15 provides a ligand contact to ADP-alpha-D-glucose.

It belongs to the glycosyltransferase 1 family. Bacterial/plant glycogen synthase subfamily.

The catalysed reaction is [(1-&gt;4)-alpha-D-glucosyl](n) + ADP-alpha-D-glucose = [(1-&gt;4)-alpha-D-glucosyl](n+1) + ADP + H(+). The protein operates within glycan biosynthesis; glycogen biosynthesis. Functionally, synthesizes alpha-1,4-glucan chains using ADP-glucose. The chain is Glycogen synthase 2 (glgA2) from Agrobacterium fabrum (strain C58 / ATCC 33970) (Agrobacterium tumefaciens (strain C58)).